We begin with the raw amino-acid sequence, 395 residues long: ATP phosphoribosyltransferase regulatory subunit (395 aa).

This sequence belongs to the class-II aminoacyl-tRNA synthetase family. HisZ subfamily. In terms of assembly, heteromultimer composed of HisG and HisZ subunits.

It is found in the cytoplasm. Its pathway is amino-acid biosynthesis; L-histidine biosynthesis; L-histidine from 5-phospho-alpha-D-ribose 1-diphosphate: step 1/9. Functionally, required for the first step of histidine biosynthesis. May allow the feedback regulation of ATP phosphoribosyltransferase activity by histidine. The polypeptide is ATP phosphoribosyltransferase regulatory subunit (Ectopseudomonas mendocina (strain ymp) (Pseudomonas mendocina)).